The following is a 2224-amino-acid chain: Protein disabled (2224 aa).

Positions 45–197 constitute a PID domain; that stretch reads FGDGVQFKAK…LHDHSSQLAS (153 aa). Tyrosine 112 is modified (phosphotyrosine; by ABL). The segment at 281 to 377 is disordered; that stretch reads GISQMERITP…GSASAGLQAA (97 aa). A compositionally biased stretch (low complexity) spans 363 to 377; the sequence is TSSSHGSASAGLQAA. Tyrosine 483 is modified (phosphotyrosine; by ABL). Disordered stretches follow at residues 607–654, 704–724, and 766–906; these read PTGH…DPFQ, LQLQ…VSAL, and RLQE…ASLG. Polar residues predominate over residues 711-723; that stretch reads STVRNRPTASVSA. The segment covering 780-799 has biased composition (pro residues); the sequence is PEPPPRPDSTPYSEPPPLPP. Over residues 827–839 the composition is skewed to polar residues; it reads LNSNVTARRTASS. Positions 880 to 890 are enriched in pro residues; the sequence is GAPPPLLPPPS. A Phosphoserine modification is found at serine 998. 6 disordered regions span residues 1212 to 1321, 1334 to 1519, 1545 to 1566, 1603 to 2100, 2134 to 2164, and 2177 to 2224; these read QTHA…TKDD, NLSL…HTDR, ARRD…LSRS, AYER…PITQ, AGSA…RQEL, and KQED…DENM. The span at 1240–1249 shows a compositional bias: acidic residues; that stretch reads DYDEDEDADA. A compositionally biased stretch (polar residues) spans 1267-1281; sequence GQDQYEKLSTSTQQL. Low complexity predominate over residues 1292-1302; the sequence is QQLQQQSLPPK. 4 positions are modified to phosphoserine: serine 1336, serine 1339, serine 1344, and serine 1348. Polar residues-rich tracts occupy residues 1361–1373, 1386–1401, and 1438–1451; these read TPSQ…TSPI, PSQL…TATK, and SNTS…SPCS. The segment covering 1555–1564 has biased composition (basic residues); that stretch reads QQRKFKHGLS. Tyrosine 1604 and tyrosine 1609 each carry phosphotyrosine; by ABL. The segment covering 1616–1647 has biased composition (basic and acidic residues); sequence YDKRGQLRGKYRGDHRDRERERDRDREYRDYA. The Alternate Arg and acidic residues repeat unit spans residues 1631 to 1642; that stretch reads RDRERERDRDRE. The interval 1631–1743 is repeat-rich region; sequence RDRERERDRD…RERDRERDRE (113 aa). Residues tyrosine 1643, tyrosine 1646, tyrosine 1655, and tyrosine 1681 each carry the phosphotyrosine; by ABL modification. A compositionally biased stretch (basic and acidic residues) spans 1680–1701; that stretch reads LYDRERDRDRERDRKSFDRESL. The Alternate Arg and acidic residues repeat unit spans residues 1682–1692; that stretch reads DRERDRDRERD. Phosphoserine is present on residues serine 1700, serine 1713, and serine 1716. Over residues 1725–1746 the composition is skewed to basic and acidic residues; sequence DSRDDYRGDRERDRERDREQMK. The Alternate Arg and acidic residues repeat unit spans residues 1733–1743; that stretch reads DRERDRERDRE. Tyrosine 1768 is modified (phosphotyrosine; by ABL). Over residues 1775–1789 the composition is skewed to polar residues; it reads DFQQRSGVRSLQRPN. Phosphoserine occurs at positions 1811, 1812, 1814, and 1815. A compositionally biased stretch (basic and acidic residues) spans 1838–1848; that stretch reads ETERRLAESRR. Residues 1882 to 1894 are compositionally biased toward low complexity; the sequence is APSASTSAPSRSS. The residue at position 1905 (tyrosine 1905) is a Phosphotyrosine; by ABL. Positions 1913 to 1929 are enriched in acidic residues; sequence DDDDDDDEDYVDDEPPT. The span at 1945–1960 shows a compositional bias: basic and acidic residues; it reads HQRMLESERRQMERHQ. 3 stretches are compositionally biased toward polar residues: residues 1988–2003, 2013–2024, and 2050–2067; these read YEQT…ASST, GESSAGVTSSKF, and CNST…NGGS. Phosphoserine is present on serine 2074. Residues 2077–2086 are compositionally biased toward basic and acidic residues; sequence FSDREKREQF. Residues 2149–2162 are compositionally biased toward polar residues; that stretch reads RKQNMRTSKLQQRQ. Residues 2187 to 2206 are compositionally biased toward basic and acidic residues; the sequence is FFKSPDQEQAMDQHNDDTEG.

Binds the SH3 domains of drk via the Pro-rich domain. When phosphorylated, can interact with the SH2 domains of drk. Binds sev via the phosphotyrosine interaction domain (PID). Probably phosphorylated by the Abl tyrosine kinase. Phosphorylated on tyrosine residues in response to sevenless activation. In terms of tissue distribution, uniformly expressed in the embryo from blastoderm through gastrulation. Highly expressed in the mesoderm and CNS during germ-band retraction. CNS expression is later localized to axon bundles. Detected in the embryonic PNS and body wall muscles. Expressed in the eye at the morphogenetic furrow and in developing photoreceptor cells posterior to the furrow.

Its subcellular location is the cytoplasm. Functionally, together with Abl, involved in embryonic neural development. May have a role in eye development. Acts as an adapter protein for SH2-domain containing proteins during sevenless (sev) signaling. This Drosophila melanogaster (Fruit fly) protein is Protein disabled (Dab).